The following is an 802-amino-acid chain: Ent-copalyl diphosphate synthase, chloroplastic (802 aa).

The transit peptide at 1–60 directs the protein to the chloroplast; the sequence is MSLQYHVLNSIPSTTFLSSTKTTISSSFLTISGSPLNVARDKSRSGSIHCSKLRTQEYIN. K245 is a binding site for substrate. D377 and D379 together coordinate Mg(2+). The short motif at 377–380 is the DXDD motif element; sequence DIDD. A substrate-binding site is contributed by K463.

This sequence belongs to the terpene synthase family. Tpsc subfamily. Mg(2+) is required as a cofactor. In terms of processing, the N-terminus is blocked. Expressed in roots, leaves, flowers and also in siliques.

The protein localises to the plastid. Its subcellular location is the chloroplast. The catalysed reaction is (2E,6E,10E)-geranylgeranyl diphosphate = ent-copalyl diphosphate. Its pathway is plant hormone biosynthesis; gibberellin biosynthesis. Inhibited by high concentrations of magnesium. Its function is as follows. Catalyzes the conversion of geranylgeranyl diphosphate to the gibberellin precursor ent-copalyl diphosphate. The protein is Ent-copalyl diphosphate synthase, chloroplastic (GA1) of Arabidopsis thaliana (Mouse-ear cress).